A 716-amino-acid polypeptide reads, in one-letter code: Zinc finger protein 840 (716 aa).

In terms of domain architecture, KRAB spans Val-42–Pro-113. 18 consecutive C2H2-type zinc fingers follow at residues Tyr-151–His-173, Phe-207–His-229, Tyr-235–His-257, Phe-277–His-299, Tyr-305–His-327, His-333–His-355, Phe-361–His-383, Phe-389–His-411, Tyr-417–His-439, Phe-445–His-467, Tyr-473–His-495, Phe-501–His-523, Phe-549–His-571, Phe-577–His-599, Tyr-605–His-627, Phe-633–His-655, Tyr-661–His-683, and Phe-689–His-711. A disordered region spans residues Lys-515–Pro-548.

This sequence belongs to the krueppel C2H2-type zinc-finger protein family.

It is found in the nucleus. May be involved in transcriptional regulation. The polypeptide is Zinc finger protein 840 (ZNF840P) (Homo sapiens (Human)).